The chain runs to 314 residues: Beta-lactamase 2 (314 aa).

A signal peptide spans 1-26; the sequence is MLHTRIRRATLGAVAALSLVPVMACG. Residues 32–47 are compositionally biased toward low complexity; it reads DAAEPAGSAPSSSAAA. Residues 32-51 form a disordered region; that stretch reads DAAEPAGSAPSSSAAAHKPG. The active-site Acyl-ester intermediate is S96. A substrate-binding site is contributed by 258 to 260; sequence KTG.

The protein belongs to the class-A beta-lactamase family.

The enzyme catalyses a beta-lactam + H2O = a substituted beta-amino acid. In Streptomyces cacaoi, this protein is Beta-lactamase 2 (blaU).